A 213-amino-acid chain; its full sequence is Peptidyl-tRNA hydrolase (213 aa).

Tyr-26 lines the tRNA pocket. His-31 serves as the catalytic Proton acceptor. TRNA contacts are provided by Tyr-78, Asn-80, and Asn-126.

This sequence belongs to the PTH family. In terms of assembly, monomer.

It is found in the cytoplasm. It catalyses the reaction an N-acyl-L-alpha-aminoacyl-tRNA + H2O = an N-acyl-L-amino acid + a tRNA + H(+). In terms of biological role, hydrolyzes ribosome-free peptidyl-tRNAs (with 1 or more amino acids incorporated), which drop off the ribosome during protein synthesis, or as a result of ribosome stalling. Functionally, catalyzes the release of premature peptidyl moieties from peptidyl-tRNA molecules trapped in stalled 50S ribosomal subunits, and thus maintains levels of free tRNAs and 50S ribosomes. The sequence is that of Peptidyl-tRNA hydrolase from Nostoc punctiforme (strain ATCC 29133 / PCC 73102).